A 403-amino-acid polypeptide reads, in one-letter code: MWRFAVFLAAFFVQDVVGSHGDPELHMTTPQIIERWGYPAMIYTVATDDGYILEMHRIPFGKTNVTWPNGKRPVVFMQHGLLCASSDWVVNLPDQSAGFLFADAGFDVWLGNMRGNTYSMKHKDLKPSHSAFWDWSWDEMATYDLNAMINHVLEVTGQDSVYYMGHSQGTLTMFSHLSKDDGSFAKKIKKFFALAPIGSVKHIKGFLSFFANYFSLEFDGWFDIFGAGEFLPNNWAMKLAAKDICGGLKVEADLCDNVLFLIAGPESDQWNQTRVPVYATHDPAGTSTQNIVHWMQMVHHGGVPAYDWGTKTNKKKYGQANPPEYDFTAIKGTKIYLYWSDADWLADTPDVPDYLLTRLNPAIVAQNNHLPDYNHLDFTWGLRAPDDIYRPAIKLCTDDYLGK.

The first 18 residues, 1–18, serve as a signal peptide directing secretion; the sequence is MWRFAVFLAAFFVQDVVG. N-linked (GlcNAc...) asparagine glycosylation occurs at N64. The Nucleophile role is filled by S167. N-linked (GlcNAc...) asparagine glycosylation occurs at N271. Residues D343 and H375 each act as charge relay system in the active site.

Belongs to the AB hydrolase superfamily. Lipase family.

The protein localises to the lysosome lumen. It localises to the secreted. In terms of biological role, lipase involved in lipid homeostasis. Regulates mitochondrial lipid composition, in particular cardiolipins and coenzyme Q-9 levels, in response to nutrient availability. Does not affect global triglyceride levels in response to nutrient availability. However, in coelomocytes, specifically promotes triglyceride catabolism and lifespan extension in response to nutrient deprivation. The protein is Lipase lipl-5 of Caenorhabditis elegans.